Reading from the N-terminus, the 483-residue chain is Putative (R)-citramalate synthase CimA (483 aa).

Positions 1–245 (MRDGEQTPGV…DTGIKHEQIY (245 aa)) constitute a Pyruvate carboxyltransferase domain.

It belongs to the alpha-IPM synthase/homocitrate synthase family. Homodimer.

The catalysed reaction is pyruvate + acetyl-CoA + H2O = (3R)-citramalate + CoA + H(+). It functions in the pathway amino-acid biosynthesis; L-isoleucine biosynthesis; 2-oxobutanoate from pyruvate: step 1/3. Its function is as follows. Catalyzes the condensation of pyruvate and acetyl-coenzyme A to form (R)-citramalate. In Methanosarcina acetivorans (strain ATCC 35395 / DSM 2834 / JCM 12185 / C2A), this protein is Putative (R)-citramalate synthase CimA.